The following is a 396-amino-acid chain: MAQDKFKRTKLHVNVGTIGHVDHGKTTLTAALTKVGAERFGGEFKAYDAIDAAPEEKARGITISTAHVEYETEVRHYAHVDCPGHADYVKNMITGAAQMDGAILVCSAADGPMPQTREHILLARQVGVPYIVVFLNKADMVDDAELLELVEMEVRELLSKYDFPGDDTPIVRGSALKALEGDQSEIGVPAIIRLAEALDTHIPNPERAIDRPFLMPVEDVFSISGRGTVVTGRIECGVIKVGDEVEIVGIRPTSKTIVTGVEMFRKLLDQGQAGDNAGLLLRGTKRDEVERGQVLAKPGCIKAHKEFEAEVYVLSKEEGGRHTPFFNGYTPQFYMRTTDITGKVCLPEGVEMVMPGDNVKVTVSLINPVAMGEGQRFAIREGGRTVGAGVVSKVIG.

The tr-type G domain maps to 10–206 (KLHVNVGTIG…ALDTHIPNPE (197 aa)). Residues 19–26 (GHVDHGKT) are G1. A GTP-binding site is contributed by 19–26 (GHVDHGKT). A Mg(2+)-binding site is contributed by threonine 26. Residues 60 to 64 (GITIS) form a G2 region. Residues 81 to 84 (DCPG) form a G3 region. GTP-binding positions include 81–85 (DCPGH) and 136–139 (NKAD). The tract at residues 136 to 139 (NKAD) is G4. The tract at residues 174 to 176 (SAL) is G5.

The protein belongs to the TRAFAC class translation factor GTPase superfamily. Classic translation factor GTPase family. EF-Tu/EF-1A subfamily. Monomer.

Its subcellular location is the cytoplasm. It carries out the reaction GTP + H2O = GDP + phosphate + H(+). Its function is as follows. GTP hydrolase that promotes the GTP-dependent binding of aminoacyl-tRNA to the A-site of ribosomes during protein biosynthesis. The polypeptide is Elongation factor Tu (Xylella fastidiosa (strain Temecula1 / ATCC 700964)).